A 206-amino-acid polypeptide reads, in one-letter code: MGNLFGKKKATRVTEQDRAVLQLKQQRDKLKQYQKRITLQMDKERQLAKQLLKDGKKDKALLLLKKKRYQDQLLEKTENQISNLERMVQDIEFAQIEMKVIEGLKVGNDCLKKMHEVLSIEEVEKIMDETHDAIEYQKQIDEMLAGSLTQEDEEAVLAELEAITQGEADLELPEVPGEELPEVPEQEPVREKERVKKKPEREMVAV.

The N-myristoyl glycine moiety is linked to residue Gly-2. Positions 11-103 (TRVTEQDRAV…AQIEMKVIEG (93 aa)) form a coiled coil. Positions 167-206 (EADLELPEVPGEELPEVPEQEPVREKERVKKKPEREMVAV) are disordered. The segment covering 168-185 (ADLELPEVPGEELPEVPE) has biased composition (acidic residues). The Type-2 MIT-interacting motif motif lies at 170-181 (LELPEVPGEELP). The segment covering 187-206 (EPVREKERVKKKPEREMVAV) has biased composition (basic and acidic residues).

The protein belongs to the SNF7 family. In terms of assembly, probable core component of the endosomal sorting required for transport complex III (ESCRT-III). ESCRT-III components are thought to multimerize to form a flat lattice on the perimeter membrane of the endosome.

The protein resides in the endomembrane system. It localises to the late endosome membrane. In terms of biological role, probable core component of the endosomal sorting required for transport complex III (ESCRT-III) which is involved in multivesicular bodies (MVBs) formation and sorting of endosomal cargo proteins into MVBs. MVBs contain intraluminal vesicles (ILVs) that are generated by invagination and scission from the limiting membrane of the endosome and mostly are delivered to lysosomes enabling degradation of membrane proteins, such as stimulated growth factor receptors, lysosomal enzymes and lipids. In the ESCRT-III complex, it probably serves as an acceptor for the ESCRT-II complex on endosomal membranes. The polypeptide is Charged multivesicular body protein 6 (chmp6) (Danio rerio (Zebrafish)).